The primary structure comprises 107 residues: Putative double-stranded DNA mimic protein HS_0995 (107 aa).

The protein belongs to the putative dsDNA mimic protein family.

May act as a double-stranded DNA (dsDNA) mimic. Probably regulates the activity of a dsDNA-binding protein. This is Putative double-stranded DNA mimic protein HS_0995 from Histophilus somni (strain 129Pt) (Haemophilus somnus).